A 621-amino-acid polypeptide reads, in one-letter code: MSTYGYTHYTSTSQGRGLASGAYTSGFGGLVSGMSSAGAICTTQIRDAREREKREIGLLNDRLADYIEKVRFLEAQNQCLSHDIDILRRGFSGGGHVSGLYDTEIAQAKRILEQTIAGHAAFDRDIAALGSDIDAIRKKWIDAVNAVKAHREDHDVDLDRLAKVEAEISLFKRKIRIVEEDVIRIRRENDGIYNEIARIKQLTHNEIALKNERSLNVQDLLQRIKLLQTENSTRIEQELVFIRRDTTAENRDYFRHELQAAIRDIRADYEAISIRNRNDIEVWYREQIRKIQTESKPVNQDLYKEELASIRTTVTNVKSRLAEVEGRNFFLEKLIEDLRNNEESKLYEISLAEKDAQIARLREQCTELSIQMERLCDNEISLRAEIERYRVLLNGANVTTYVSNTHPSGVSVGGIVGTTRVISQTTRTNSSSNTSYSGVPASRTGYSVGGNIGGISVGGTIGGVSVGGNVGAHGASGHVSGGAAGSVSSLVSEKRPDRVHDEKGVDASGRSFHSWYLGTISINQITPSYIELKNICKIRRVDVGGFRVEQYINGELLGSAQINVPLILDPQEVVRIHHRHGKYLGQFFMDVDAFDNSTASRTSMYNYTEPNEERAWFVYLN.

The segment at 20 to 55 (SGAYTSGFGGLVSGMSSAGAICTTQIRDAREREKRE) is head. In terms of domain architecture, IF rod spans 52-400 (EKREIGLLND…VLLNGANVTT (349 aa)). Residues 56 to 87 (IGLLNDRLADYIEKVRFLEAQNQCLSHDIDIL) form a coil 1A region. Residues 88-100 (RRGFSGGGHVSGL) form a linker 1 region. The tract at residues 101 to 238 (YDTEIAQAKR…TENSTRIEQE (138 aa)) is coil 1B. The tract at residues 239 to 256 (LVFIRRDTTAENRDYFRH) is linker 12. Residues 257 to 400 (ELQAAIRDIR…VLLNGANVTT (144 aa)) are coil 2. The interval 401 to 549 (YVSNTHPSGV…RVDVGGFRVE (149 aa)) is tail. The 114-residue stretch at 508 to 621 (SGRSFHSWYL…EERAWFVYLN (114 aa)) folds into the LTD domain.

The protein belongs to the intermediate filament family.

It is found in the cytoplasm. Its function is as follows. Cytoplasmic intermediate filaments provide mechanical strength to cells. The protein is Intermediate filament protein ifc-2 of Caenorhabditis briggsae.